Reading from the N-terminus, the 195-residue chain is Glycerol-3-phosphate acyltransferase (195 aa).

Transmembrane regions (helical) follow at residues 3-23, 51-71, 79-99, 111-131, and 153-173; these read EAAL…YFFT, GVAL…AWIG, LLVI…FLGF, IILF…LAIV, and LAMG…ALVV.

Belongs to the PlsY family. As to quaternary structure, probably interacts with PlsX.

Its subcellular location is the cell membrane. It carries out the reaction an acyl phosphate + sn-glycerol 3-phosphate = a 1-acyl-sn-glycero-3-phosphate + phosphate. Its pathway is lipid metabolism; phospholipid metabolism. Catalyzes the transfer of an acyl group from acyl-phosphate (acyl-PO(4)) to glycerol-3-phosphate (G3P) to form lysophosphatidic acid (LPA). This enzyme utilizes acyl-phosphate as fatty acyl donor, but not acyl-CoA or acyl-ACP. The chain is Glycerol-3-phosphate acyltransferase from Syntrophomonas wolfei subsp. wolfei (strain DSM 2245B / Goettingen).